A 505-amino-acid polypeptide reads, in one-letter code: Ent-kaurene oxidase 2 (505 aa).

Residues Ala-3–Ala-23 form a helical membrane-spanning segment. A heme-binding site is contributed by Cys-449.

The protein belongs to the cytochrome P450 family. Heme serves as cofactor. Widely expressed.

The protein localises to the membrane. It carries out the reaction ent-kaur-16-ene + 3 reduced [NADPH--hemoprotein reductase] + 3 O2 = ent-kaur-16-en-19-oate + 3 oxidized [NADPH--hemoprotein reductase] + 4 H2O + 4 H(+). Its pathway is plant hormone biosynthesis; gibberellin biosynthesis. Functionally, catalyzes three successive oxidations of the 4-methyl group of ent-kaurene giving kaurenoic acid, a key step in gibberellins (GAs) biosynthesis. GAs, which are involved many processes, including stem elongation, play a central role in plant development. The sequence is that of Ent-kaurene oxidase 2 from Oryza sativa subsp. japonica (Rice).